The following is a 208-amino-acid chain: Holliday junction branch migration complex subunit RuvA (208 aa).

The interval 1–64 (MIGKLKGIVD…EDMIRLYGFR (64 aa)) is domain I. The segment at 65-143 (VDAEREWFRL…AFAPIDPALI (79 aa)) is domain II. The interval 144-152 (ALTGAVEDR) is flexible linker. The domain III stretch occupies residues 153 to 208 (TAPQPVADAISALVNLGYAQIQASAAIAAALKGLGEEAGTVEAKTLIRLGLRELAR).

Belongs to the RuvA family. In terms of assembly, homotetramer. Forms an RuvA(8)-RuvB(12)-Holliday junction (HJ) complex. HJ DNA is sandwiched between 2 RuvA tetramers; dsDNA enters through RuvA and exits via RuvB. An RuvB hexamer assembles on each DNA strand where it exits the tetramer. Each RuvB hexamer is contacted by two RuvA subunits (via domain III) on 2 adjacent RuvB subunits; this complex drives branch migration. In the full resolvosome a probable DNA-RuvA(4)-RuvB(12)-RuvC(2) complex forms which resolves the HJ.

It is found in the cytoplasm. In terms of biological role, the RuvA-RuvB-RuvC complex processes Holliday junction (HJ) DNA during genetic recombination and DNA repair, while the RuvA-RuvB complex plays an important role in the rescue of blocked DNA replication forks via replication fork reversal (RFR). RuvA specifically binds to HJ cruciform DNA, conferring on it an open structure. The RuvB hexamer acts as an ATP-dependent pump, pulling dsDNA into and through the RuvAB complex. HJ branch migration allows RuvC to scan DNA until it finds its consensus sequence, where it cleaves and resolves the cruciform DNA. The sequence is that of Holliday junction branch migration complex subunit RuvA from Methylorubrum extorquens (strain CM4 / NCIMB 13688) (Methylobacterium extorquens).